A 290-amino-acid polypeptide reads, in one-letter code: Arylamine N-acetyltransferase 1 (290 aa).

Residue M1 is modified to N-acetylmethionine. Catalysis depends on C68, which acts as the Acyl-thioester intermediate. S103 contacts CoA. 106-107 (VH) contacts substrate. Catalysis depends on residues H107 and D122. Y208 serves as a coordination point for CoA.

Belongs to the arylamine N-acetyltransferase family.

It is found in the cytoplasm. The enzyme catalyses an arylamine + acetyl-CoA = an N-acetylarylamine + CoA. Its function is as follows. Participates in the detoxification of a plethora of hydrazine and arylamine drugs. Acetylates both arylamines and arylalkylamines. This is Arylamine N-acetyltransferase 1 (Nat1) from Rattus norvegicus (Rat).